Here is a 216-residue protein sequence, read N- to C-terminus: Cytidylate kinase (216 aa).

Residue 7–15 (GPSGTGKST) participates in ATP binding.

This sequence belongs to the cytidylate kinase family. Type 1 subfamily.

The protein localises to the cytoplasm. It carries out the reaction CMP + ATP = CDP + ADP. It catalyses the reaction dCMP + ATP = dCDP + ADP. This Chlamydia trachomatis serovar L2 (strain ATCC VR-902B / DSM 19102 / 434/Bu) protein is Cytidylate kinase.